The chain runs to 336 residues: MYYPLVKKALFQLDPERAHEFTFRQLKRLTGTPLQFLVSQSVPTKPVSCMGLSFKNPLGLAAGLDKDGECIDALGAMGFGFIEVGTVTPKPQSGNDKPRLFRIVEAEGLINRMGFNNHGVDNLIENVKKSHFGGILGINIGKNKDTPVEQGKEDYLICMDKVYPYAGYIAINISSPNTPGLRSLQYGEALDDLLAAIKNKQTELHQRHHKYVPVAVKIAPDLTEEELIQIADSLVRHNIDGVIATNTTLDRSLIQGLNYCEQAGGLSGRPLQLRSTEVIRRLSQELQGRLPIIGVGGIDSVTAAREKMAAGASLIQIYSGFIFRGPGLIKNIVTHI.

FMN contacts are provided by residues 62–66 and threonine 86; that span reads AGLDK. Substrate is bound at residue lysine 66. 111 to 115 contributes to the substrate binding site; sequence NRMGF. FMN contacts are provided by asparagine 139 and asparagine 172. Asparagine 172 serves as a coordination point for substrate. The active-site Nucleophile is the serine 175. Asparagine 177 lines the substrate pocket. Lysine 217 and threonine 245 together coordinate FMN. Substrate is bound at residue 246-247; it reads NT. FMN contacts are provided by residues glycine 268, glycine 297, and 318–319; that span reads YS.

This sequence belongs to the dihydroorotate dehydrogenase family. Type 2 subfamily. As to quaternary structure, monomer. Requires FMN as cofactor.

Its subcellular location is the cell membrane. It catalyses the reaction (S)-dihydroorotate + a quinone = orotate + a quinol. It functions in the pathway pyrimidine metabolism; UMP biosynthesis via de novo pathway; orotate from (S)-dihydroorotate (quinone route): step 1/1. Catalyzes the conversion of dihydroorotate to orotate with quinone as electron acceptor. The chain is Dihydroorotate dehydrogenase (quinone) from Yersinia enterocolitica serotype O:8 / biotype 1B (strain NCTC 13174 / 8081).